The sequence spans 517 residues: GMP synthase [glutamine-hydrolyzing] (517 aa).

Residues 9 to 199 (RILILDFGSQ…VLGVCGCERL (191 aa)) form the Glutamine amidotransferase type-1 domain. Cysteine 86 (nucleophile) is an active-site residue. Active-site residues include histidine 173 and glutamate 175. The GMPS ATP-PPase domain occupies 200-392 (WTSESIIEDA…LGLPYNMLYR (193 aa)). Residue 227–233 (SGGVDSS) participates in ATP binding.

Homodimer.

It catalyses the reaction XMP + L-glutamine + ATP + H2O = GMP + L-glutamate + AMP + diphosphate + 2 H(+). Its pathway is purine metabolism; GMP biosynthesis; GMP from XMP (L-Gln route): step 1/1. In terms of biological role, catalyzes the synthesis of GMP from XMP. In Vibrio parahaemolyticus serotype O3:K6 (strain RIMD 2210633), this protein is GMP synthase [glutamine-hydrolyzing].